Consider the following 170-residue polypeptide: Type IV pilus assembly protein C (170 aa).

A signal peptide spans 1–23; sequence MKSKLPLILINLSLISSPLGANA. A disordered region spans residues 87–107; sequence KTVSKPAKSNTPPQQAPVNNS. Residues 93 to 107 are compositionally biased toward polar residues; it reads AKSNTPPQQAPVNNS. A coiled-coil region spans residues 109 to 166; sequence RSILEAELSNERKALTEAQKMLSQARLAKGGNINHQKINALQSNVLDRQQNIQALQRE.

The protein resides in the periplasm. In terms of biological role, required for stabilizing type IV pilus (T4p) in extended, nonretracted conformation on the bacterial cell surface. The polypeptide is Type IV pilus assembly protein C (Neisseria gonorrhoeae (strain ATCC 700825 / FA 1090)).